The following is a 211-amino-acid chain: Large ribosomal subunit protein uL4 (211 aa).

Residues 63-94 form a disordered region; the sequence is RFGRQKGGGTARHGARSAPQFVGGGKAHGPRV.

Belongs to the universal ribosomal protein uL4 family. As to quaternary structure, part of the 50S ribosomal subunit.

Its function is as follows. One of the primary rRNA binding proteins, this protein initially binds near the 5'-end of the 23S rRNA. It is important during the early stages of 50S assembly. It makes multiple contacts with different domains of the 23S rRNA in the assembled 50S subunit and ribosome. Forms part of the polypeptide exit tunnel. The polypeptide is Large ribosomal subunit protein uL4 (Maricaulis maris (strain MCS10) (Caulobacter maris)).